Here is a 373-residue protein sequence, read N- to C-terminus: tRNA-specific 2-thiouridylase MnmA (373 aa).

Residues 12–19 (GMSGGVDS) and Met-38 contribute to the ATP site. The interval 98–100 (NPD) is interaction with target base in tRNA. The active-site Nucleophile is the Cys-103. The cysteines at positions 103 and 200 are disulfide-linked. Residue Gly-127 participates in ATP binding. The segment at 150-152 (KDQ) is interaction with tRNA. Residue Cys-200 is the Cysteine persulfide intermediate of the active site. Residues 312 to 313 (RY) are interaction with tRNA.

This sequence belongs to the MnmA/TRMU family.

Its subcellular location is the cytoplasm. The enzyme catalyses S-sulfanyl-L-cysteinyl-[protein] + uridine(34) in tRNA + AH2 + ATP = 2-thiouridine(34) in tRNA + L-cysteinyl-[protein] + A + AMP + diphosphate + H(+). In terms of biological role, catalyzes the 2-thiolation of uridine at the wobble position (U34) of tRNA, leading to the formation of s(2)U34. The sequence is that of tRNA-specific 2-thiouridylase MnmA from Streptococcus pneumoniae (strain CGSP14).